The primary structure comprises 294 residues: 33 kDa chaperonin (294 aa).

Cystine bridges form between Cys230–Cys232 and Cys263–Cys266.

The protein belongs to the HSP33 family. Under oxidizing conditions two disulfide bonds are formed involving the reactive cysteines. Under reducing conditions zinc is bound to the reactive cysteines and the protein is inactive.

It is found in the cytoplasm. Functionally, redox regulated molecular chaperone. Protects both thermally unfolding and oxidatively damaged proteins from irreversible aggregation. Plays an important role in the bacterial defense system toward oxidative stress. The protein is 33 kDa chaperonin of Chromobacterium violaceum (strain ATCC 12472 / DSM 30191 / JCM 1249 / CCUG 213 / NBRC 12614 / NCIMB 9131 / NCTC 9757 / MK).